A 556-amino-acid polypeptide reads, in one-letter code: Formate--tetrahydrofolate ligase (556 aa).

Position 65–72 (65–72 (TPAGEGKS)) interacts with ATP.

This sequence belongs to the formate--tetrahydrofolate ligase family.

The enzyme catalyses (6S)-5,6,7,8-tetrahydrofolate + formate + ATP = (6R)-10-formyltetrahydrofolate + ADP + phosphate. It functions in the pathway one-carbon metabolism; tetrahydrofolate interconversion. This Streptococcus pneumoniae (strain JJA) protein is Formate--tetrahydrofolate ligase.